Here is an 864-residue protein sequence, read N- to C-terminus: Dynamin-1 (864 aa).

One can recognise a Dynamin-type G domain in the interval 28–294 (DLDLPQIAVV…LTNHIRDTLP (267 aa)). The G1 motif stretch occupies residues 38–45 (GGQSAGKS). Residues serine 41, glycine 43, lysine 44, serine 45, serine 46, arginine 59, and glycine 60 each contribute to the GDP site. The G2 motif stretch occupies residues 64–66 (VTR). Tyrosine 80 is modified (phosphotyrosine). 3'-nitrotyrosine; alternate is present on tyrosine 125. Tyrosine 125 carries the post-translational modification Phosphotyrosine; alternate. The G3 motif stretch occupies residues 136–139 (DLPG). The interval 205 to 208 (TKLD) is G4 motif. 6 residues coordinate GDP: lysine 206, aspartate 208, aspartate 211, asparagine 236, arginine 237, and glutamine 239. The G5 motif stretch occupies residues 235–238 (VNRS). Serine 306 and serine 347 each carry phosphoserine. At tyrosine 354 the chain carries Phosphotyrosine. The residue at position 512 (serine 512) is a Phosphoserine. Residues 519 to 625 (LVIRKGWLTI…WKASFLRAGV (107 aa)) enclose the PH domain. The 92-residue stretch at 659–750 (VETIRNLVDS…IIGDINTTTV (92 aa)) folds into the GED domain. Residues 767–864 (SVPAGRRSPT…PESPRPPFDL (98 aa)) form a disordered region. Serine 774 carries the phosphoserine; by GSK3-beta modification. Serine 778 bears the Phosphoserine mark. At arginine 796 the chain carries Omega-N-methylarginine. Phosphoserine is present on serine 822. Residues 825-843 (PFGPPPQVPSRPNRAPPGV) are compositionally biased toward pro residues. Phosphoserine is present on residues serine 851 and serine 857.

Belongs to the TRAFAC class dynamin-like GTPase superfamily. Dynamin/Fzo/YdjA family. In terms of assembly, homodimer; homodimerization is mediated by the dynamin-type G domain which promotes assembly-stimulated GTPase activity. Homo-tetramer formed from two dimers in the absence of lipid. Oligomerizes into a helical polymer that self-assembles around the vesicle membrane, when associated to the menbrane through lipid binding. Interacts (via C-terminal proline-rich domain (PRD)) with SNX9 (via SH3 domain); this interaction allows regulation of DNM1 self-assembly during late stages of endocytic vesicle formation and supports DNM1's early functions in accelerating clathrin-coated pits (CCPs) maturation in non neuronals cell. Interacts (via C-terminal proline-rich domain (PRD)) with MYO1E (via SH3 domain); this interaction regulates receptor-mediated endocytosis. Interacts with SNX33 (via SH3 domain); this interaction decreases DNM1-dependent endocytosis. Interacts with DIAPH1. Interacts with GRB2 (via SH3 domain); this interaction mediates disassembly of DNM1 polymers, therefore modulates self-assembly. Forms a complex with BIN1 (via SH3 domain) and SH3GL2 (via SH3 domain). Forms a complex with SH3GL2 (via SH3 domain) and AMPH (via SH3 domain). Forms a complex with SH3GL2 (via SH3 domain) and SYNJ1. Interacts with AMPH. Interacts (via C-terminal proline-rich domain (PRD)) with SYT1; this interaction facilitates vesicle fission during clathrin-mediated endocytosis (CME). Interacts (via C-terminal proline-rich domain (PRD)) with PLCG1 (via SH3 domain); this interaction stimulates the release of GDP from DNM1 and enhances DNM1-dependent endocytosis. Interacts with SNPH; this interaction inhibits the binding of DNM1 to AMPH and DNM1-receptor-mediated endocytosis. Interacts with CAV1. Interacts with SH3GLB1 (via SH3 domain). Interacts with PACSIN1 (via SH3 domain), PACSIN2 (via SH3 domain) and PACSIN3 (via SH3 domain). Interacts with UNC119; this interaction decreases DNM1's GTPase activity and affects DNM1's interaction with AMPH. Interacts (GTP-bound form) with DNAJC6; this interaction allows clathrin-coated vesicle (CCV) formation at the plasma membrane. In terms of processing, phosphorylation at Ser-774 by GSK3B/GSK3-beta leads to inactivation of receptor-mediated endocytosis in non-neuronal cells. Dephosphorylation at Ser-774, through the EGFR downstream signaling, leads to activation and regulates early stages of clathrin-mediated endocytosis (CME). Phosphorylated by CDK5 leading to synaptic vesicle endocytosis (SVE) activation.

It is found in the cell membrane. It localises to the membrane. The protein resides in the clathrin-coated pit. Its subcellular location is the cytoplasmic vesicle. The protein localises to the presynapse. It is found in the secretory vesicle. It localises to the chromaffin granule. It catalyses the reaction GTP + H2O = GDP + phosphate + H(+). GTPase activity is activated by 1-phosphatidyl-1D-myo-inositol 4,5-bisphosphate. GTPase activity is inhibited by the heterodimer G protein formed by GNB1 and GNG2 with an IC(50)=400 nM when DNM1 concentration is 5 nM. Functionally, catalyzes the hydrolysis of GTP and utilizes this energy to mediate vesicle scission and participates in many forms of endocytosis, such as clathrin-mediated endocytosis or synaptic vesicle endocytosis as well as rapid endocytosis (RE). Associates to the membrane, through lipid binding, and self-assembles into rings and stacks of interconnected rings through oligomerization to form a helical polymer around the vesicle membrane leading to constriction of invaginated coated pits around their necks. Self-assembly of the helical polymer induces membrane tubules narrowing until the polymer reaches a length sufficient to trigger GTP hydrolysis. Depending on the curvature imposed on the tubules, membrane detachment from the helical polymer upon GTP hydrolysis can cause spontaneous hemifission followed by complete fission. May play a role in regulating early stages of clathrin-mediated endocytosis in non-neuronal cells through its activation by dephosphorylation via the signaling downstream of EGFR. Controls vesicle size at a step before fission, during formation of membrane pits, at hippocampal synapses. Controls plastic adaptation of the synaptic vesicle recycling machinery to high levels of activity. Mediates rapid endocytosis (RE), a Ca(2+)-dependent and clathrin- and K(+)-independent process in chromaffin cells. Microtubule-associated force-producing protein involved in producing microtubule bundles and able to bind and hydrolyze GTP. Through its interaction with DNAJC6, acts during the early steps of clathrin-coated vesicle (CCV) formation. In Homo sapiens (Human), this protein is Dynamin-1.